Reading from the N-terminus, the 461-residue chain is Argininosuccinate lyase (461 aa).

The protein belongs to the lyase 1 family. Argininosuccinate lyase subfamily.

Its subcellular location is the cytoplasm. It catalyses the reaction 2-(N(omega)-L-arginino)succinate = fumarate + L-arginine. Its pathway is amino-acid biosynthesis; L-arginine biosynthesis; L-arginine from L-ornithine and carbamoyl phosphate: step 3/3. The sequence is that of Argininosuccinate lyase from Chlorobium luteolum (strain DSM 273 / BCRC 81028 / 2530) (Pelodictyon luteolum).